The sequence spans 382 residues: 4-hydroxy-3-methylbut-2-en-1-yl diphosphate synthase (flavodoxin) (382 aa).

[4Fe-4S] cluster contacts are provided by Cys290, Cys293, Cys327, and Glu334.

This sequence belongs to the IspG family. It depends on [4Fe-4S] cluster as a cofactor.

The enzyme catalyses (2E)-4-hydroxy-3-methylbut-2-enyl diphosphate + oxidized [flavodoxin] + H2O + 2 H(+) = 2-C-methyl-D-erythritol 2,4-cyclic diphosphate + reduced [flavodoxin]. It functions in the pathway isoprenoid biosynthesis; isopentenyl diphosphate biosynthesis via DXP pathway; isopentenyl diphosphate from 1-deoxy-D-xylulose 5-phosphate: step 5/6. In terms of biological role, converts 2C-methyl-D-erythritol 2,4-cyclodiphosphate (ME-2,4cPP) into 1-hydroxy-2-methyl-2-(E)-butenyl 4-diphosphate. The sequence is that of 4-hydroxy-3-methylbut-2-en-1-yl diphosphate synthase (flavodoxin) from Rhodopirellula baltica (strain DSM 10527 / NCIMB 13988 / SH1).